The following is an 858-amino-acid chain: DNA mismatch repair protein MutS (858 aa).

Residue G613–S620 participates in ATP binding.

It belongs to the DNA mismatch repair MutS family.

This protein is involved in the repair of mismatches in DNA. It is possible that it carries out the mismatch recognition step. This protein has a weak ATPase activity. This is DNA mismatch repair protein MutS from Dehalococcoides mccartyi (strain CBDB1).